A 172-amino-acid chain; its full sequence is Histone H1-like protein HC2 (172 aa).

The disordered stretch occupies residues 1–77 (MIGAQKKQSG…TVAKKPAVKK (77 aa)). The segment covering 8 to 77 (QSGKKTASRA…TVAKKPAVKK (70 aa)) has biased composition (basic residues).

The protein belongs to the histone H1/H5 family. HCT subfamily.

Functionally, might have a role in establishing the nucleoid structure of elementary bodies. The protein is Histone H1-like protein HC2 (hctB) of Chlamydia pneumoniae (Chlamydophila pneumoniae).